Here is a 1454-residue protein sequence, read N- to C-terminus: ABC transporter G family member 39 (1454 aa).

The region spanning 175–448 (LGFFHLLPSK…FEYFGFQCPE (274 aa)) is the ABC transporter 1 domain. Residue 208-215 (GPPSSGKT) coordinates ATP. The ABC transmembrane type-2 1 domain maps to 526 to 739 (ELFKACFDRE…GQTAIVMNEF (214 aa)). 7 helical membrane-spanning segments follow: residues 544–564 (FVYV…MTVY), 584–604 (MFFS…FTVM), 623–643 (FALP…GIWI), 663–683 (LLAY…LGAI), 689–709 (ISNS…GFII), 716–736 (PWMT…AIVM), and 775–795 (FWIC…FYIL). The span at 812–824 (EEGKDKQKGENRG) shows a compositional bias: basic and acidic residues. The interval 812-838 (EEGKDKQKGENRGTEGSVVELNSSSNK) is disordered. Positions 853 to 1106 (LAFNNVNYYV…LVEYFEAVEG (254 aa)) constitute an ABC transporter 2 domain. 898 to 905 (GVSGAGKT) is an ATP binding site. Positions 1178-1392 (TQTKACFWKQ…TLYGLITSQV (215 aa)) constitute an ABC transmembrane type-2 2 domain. The next 7 membrane-spanning stretches (helical) occupy residues 1199–1219 (AIRF…FWQI), 1231–1251 (NFFG…AATV), 1285–1303 (IMYN…YSMI), 1312–1332 (FLWF…YGMM), 1342–1362 (IAGI…GFLI), 1367–1387 (IPIW…LYGL), and 1423–1443 (FLPV…FVFA).

This sequence belongs to the ABC transporter superfamily. ABCG family. PDR (TC 3.A.1.205) subfamily.

The protein resides in the membrane. Functionally, may be a general defense protein. The sequence is that of ABC transporter G family member 39 (ABCG39) from Arabidopsis thaliana (Mouse-ear cress).